We begin with the raw amino-acid sequence, 368 residues long: Putative zinc metalloprotease Cj1068 (368 aa).

Residue H36 coordinates Zn(2+). Residue E37 is part of the active site. H40 provides a ligand contact to Zn(2+). 3 helical membrane-spanning segments follow: residues 112–134, 291–313, and 338–360; these read IYIL…IIIG, FTLL…LLPI, and TFEY…ATYN. The PDZ domain occupies 126 to 197; it reads AFFLYIIIGN…LKILINREGK (72 aa).

The protein belongs to the peptidase M50B family. The cofactor is Zn(2+).

Its subcellular location is the cell inner membrane. This chain is Putative zinc metalloprotease Cj1068, found in Campylobacter jejuni subsp. jejuni serotype O:2 (strain ATCC 700819 / NCTC 11168).